The primary structure comprises 564 residues: CTP synthase (564 aa).

The amidoligase domain stretch occupies residues 1-272 (MARPKNVKHI…DIRVLKKLGL (272 aa)). Residue serine 18 participates in CTP binding. Serine 18 is a binding site for UTP. 19–24 (SLGKGI) contacts ATP. L-glutamine is bound at residue tyrosine 59. Residue aspartate 76 participates in ATP binding. Mg(2+) is bound by residues aspartate 76 and glutamate 146. CTP is bound by residues 153–155 (DIE), 193–198 (KTKPTQ), and lysine 229. UTP-binding positions include 193-198 (KTKPTQ) and lysine 229. The Glutamine amidotransferase type-1 domain maps to 299–543 (TIAICGKYTE…VAAAKEFAHG (245 aa)). Glycine 363 contacts L-glutamine. Residue cysteine 390 is the Nucleophile; for glutamine hydrolysis of the active site. L-glutamine-binding positions include 391 to 394 (LGMQ), glutamate 414, and arginine 471. Catalysis depends on residues histidine 516 and glutamate 518.

Belongs to the CTP synthase family. Homotetramer.

The catalysed reaction is UTP + L-glutamine + ATP + H2O = CTP + L-glutamate + ADP + phosphate + 2 H(+). It catalyses the reaction L-glutamine + H2O = L-glutamate + NH4(+). It carries out the reaction UTP + NH4(+) + ATP = CTP + ADP + phosphate + 2 H(+). It functions in the pathway pyrimidine metabolism; CTP biosynthesis via de novo pathway; CTP from UDP: step 2/2. Allosterically activated by GTP, when glutamine is the substrate; GTP has no effect on the reaction when ammonia is the substrate. The allosteric effector GTP functions by stabilizing the protein conformation that binds the tetrahedral intermediate(s) formed during glutamine hydrolysis. Inhibited by the product CTP, via allosteric rather than competitive inhibition. In terms of biological role, catalyzes the ATP-dependent amination of UTP to CTP with either L-glutamine or ammonia as the source of nitrogen. Regulates intracellular CTP levels through interactions with the four ribonucleotide triphosphates. The sequence is that of CTP synthase from Prosthecochloris aestuarii (strain DSM 271 / SK 413).